The sequence spans 479 residues: Adenosylhomocysteinase (479 aa).

3 residues coordinate substrate: Thr65, Asp145, and Glu205. 206-208 contributes to the NAD(+) binding site; sequence TTT. Lys235 and Asp239 together coordinate substrate. NAD(+) contacts are provided by residues Asn240, 269 to 274, Glu292, Asn327, 348 to 350, and Asn393; these read GYGDVG and IGH.

It belongs to the adenosylhomocysteinase family. It depends on NAD(+) as a cofactor.

Its subcellular location is the cytoplasm. The enzyme catalyses S-adenosyl-L-homocysteine + H2O = L-homocysteine + adenosine. Its pathway is amino-acid biosynthesis; L-homocysteine biosynthesis; L-homocysteine from S-adenosyl-L-homocysteine: step 1/1. Its function is as follows. May play a key role in the regulation of the intracellular concentration of adenosylhomocysteine. In Janthinobacterium sp. (strain Marseille) (Minibacterium massiliensis), this protein is Adenosylhomocysteinase.